Consider the following 1313-residue polypeptide: Inter-alpha-trypsin inhibitor heavy chain H6 (1313 aa).

An N-terminal signal peptide occupies residues 1–23 (MSGWRYLICVSFLLTILLELTYQ). Residues 24–150 (GPPVPASSST…EVTFSLAYEE (127 aa)) form the VIT domain. N-linked (GlcNAc...) asparagine glycans are attached at residues N83, N374, N540, and N594. A VWFA domain is found at 283–469 (NVVFVIDVSS…LQLKGLYEEI (187 aa)). Disordered regions lie at residues 612–644 (QPKQ…HGLG), 783–817 (HSKP…TLQV), 856–928 (LKPS…EPLP), and 959–983 (PSRP…SPPN). The span at 623 to 640 (QTSTSAGPDTIMPSSSSR) shows a compositional bias: polar residues. The span at 864-875 (QISTSISLSKPE) shows a compositional bias: polar residues. The segment covering 876–888 (TPNPHMPQTPLPP) has biased composition (pro residues). Residues 907–921 (TISSSTGPSSTTTTS) show a composition bias toward low complexity. N-linked (GlcNAc...) asparagine glycans are attached at residues N971 and N1231.

It belongs to the ITIH family.

It is found in the secreted. This Homo sapiens (Human) protein is Inter-alpha-trypsin inhibitor heavy chain H6 (ITIH6).